A 314-amino-acid chain; its full sequence is Triosephosphate isomerase, chloroplastic (314 aa).

The span at 1–22 (MAVASTSLASQLSGPKSLSQPY) shows a compositional bias: polar residues. The tract at residues 1 to 25 (MAVASTSLASQLSGPKSLSQPYSGL) is disordered. The transit peptide at 1–59 (MAVASTSLASQLSGPKSLSQPYSGLRRSCPKLDQSHSSLFQHLSLSSSSRKASRAVVAM) directs the protein to the chloroplast. The substrate site is built by Asn70 and Lys72. Residue His154 is the Electrophile of the active site. Catalysis depends on Glu224, which acts as the Proton acceptor.

It belongs to the triosephosphate isomerase family. As to quaternary structure, homodimer.

The protein resides in the plastid. It localises to the chloroplast. It carries out the reaction D-glyceraldehyde 3-phosphate = dihydroxyacetone phosphate. It participates in carbohydrate biosynthesis; Calvin cycle. The polypeptide is Triosephosphate isomerase, chloroplastic (TPI) (Fragaria ananassa (Strawberry)).